The chain runs to 93 residues: Integration host factor subunit beta (93 aa).

It belongs to the bacterial histone-like protein family. In terms of assembly, heterodimer of an alpha and a beta chain.

In terms of biological role, this protein is one of the two subunits of integration host factor, a specific DNA-binding protein that functions in genetic recombination as well as in transcriptional and translational control. The polypeptide is Integration host factor subunit beta (ihfB) (Cereibacter sphaeroides (strain ATCC 17023 / DSM 158 / JCM 6121 / CCUG 31486 / LMG 2827 / NBRC 12203 / NCIMB 8253 / ATH 2.4.1.) (Rhodobacter sphaeroides)).